The primary structure comprises 130 residues: uncharacterized protein (130 aa).

A signal peptide spans 1–20 (MFNCLTKLVILVCLKYVAKA).

This is an uncharacterized protein from Saccharomyces cerevisiae (strain ATCC 204508 / S288c) (Baker's yeast).